We begin with the raw amino-acid sequence, 351 residues long: MGKLQDGIAIKRINDAITTFKNYKLGELEQGGSMAINTLSNVRAHVGLAWPAILRNCLIHTSSHLGFMKFMIDIATTWKVGAFTLLGSVGDEDPFTDVDLIYTKTCLHLGLKDNDFLQFPEEFAYEANSFLEAQSMNARVDMLTGVHNIEDKYVFRMQSISKFLKAYYTASEDVAYLTGFIKPDDSKDSILSAELLKAQVTSEVLRVRNLITTKIQKYINLYEDSQLPHFRQAALSYTQDWDVDGGVPAALPQPDTTDDENPVANPGPSAPTVSKGADQPEDEEMIRKKVETSKDGPPKAVPSGNVSARGFPAFLEDDMSEMDAPDGFHDYLTREHENNFDLTQLGLAPSV.

Positions 245 to 310 are disordered; the sequence is GGVPAALPQP…VPSGNVSARG (66 aa). The span at 285–297 shows a compositional bias: basic and acidic residues; it reads MIRKKVETSKDGP.

Belongs to the phytoreovirus minor outer capsid protein P9 family.

The protein localises to the virion. It is found in the host cytoplasm. Minor outer capsid protein. The sequence is that of Minor outer capsid protein P9 from Rice dwarf virus (isolate Akita) (RDV).